The chain runs to 590 residues: Asparagine synthetase [glutamine-hydrolyzing] (590 aa).

Residue Cys2 is the For GATase activity of the active site. The Glutamine amidotransferase type-2 domain occupies 2–185; the sequence is CGILAVLGCS…PGNLYSSRSG (184 aa). L-glutamine-binding positions include 50-54, 75-77, and Asp98; these read RLAII and NGE. The Asparagine synthetase domain occupies 193–516; it reads PQWYNETIPS…PQNSARFTVP (324 aa). ATP contacts are provided by residues Leu231, Val267, and 341–342; that span reads SG.

It carries out the reaction L-aspartate + L-glutamine + ATP + H2O = L-asparagine + L-glutamate + AMP + diphosphate + H(+). The protein operates within amino-acid biosynthesis; L-asparagine biosynthesis; L-asparagine from L-aspartate (L-Gln route): step 1/1. The protein is Asparagine synthetase [glutamine-hydrolyzing] of Asparagus officinalis (Garden asparagus).